The sequence spans 656 residues: PAN2-PAN3 deadenylation complex subunit PAN3 (656 aa).

The segment at 15–44 adopts a C3H1-type zinc-finger fold; sequence SFKGTQCRNIIIHGYCKFENEGCQFNHGNS. A disordered region spans residues 71 to 104; the sequence is KTSSSFTPGKSPAVRSPDFSSLPAFQPGAPVNDQ. Positions 128–148 match the PABPC-interacting motif-2 (PAM-2) motif; sequence AFAPSFNPYASESFTPSVSAG. The interval 271 to 525 is pseudokinase domain; it reads QVFPRGSLPD…NIEDFTKLFS (255 aa). ATP contacts are provided by residues Arg325, 375–382, and 428–429; these read DYYPQSQS and KK. The stretch at 526–564 forms a coiled coil; it reads HKVLSVVNSLQYNSEYLEQQLSRELENARLFRLMCKLNA. Residues 565-656 are knob domain; that stretch reads IYGRLESRID…IDSTFRALTQ (92 aa).

The protein belongs to the protein kinase superfamily. PAN3 family. As to quaternary structure, homodimer. Forms a heterotrimer with a catalytic subunit PAN2 to form the poly(A)-nuclease (PAN) deadenylation complex. Interacts (via PAM-2 motif) with poly(A)-binding protein PAB1 (via PABC domain), conferring substrate specificity of the enzyme complex.

Its subcellular location is the cytoplasm. Functionally, regulatory subunit of the poly(A)-nuclease (PAN) deadenylation complex, one of two cytoplasmic mRNA deadenylases involved in mRNA turnover. PAN specifically shortens poly(A) tails of RNA and the activity is stimulated by poly(A)-binding protein PAB1. PAN deadenylation is followed by rapid degradation of the shortened mRNA tails by the CCR4-NOT complex. Deadenylated mRNAs are then degraded by two alternative mechanisms, namely exosome-mediated 3'-5' exonucleolytic degradation, or deadenylation-dependent mRNA decaping and subsequent 5'-3' exonucleolytic degradation by XRN1. May also be involved in post-transcriptional maturation of mRNA poly(A) tails. PAN3 acts as a positive regulator for PAN activity, recruiting the catalytic subunit PAN2 to mRNA via its interaction with RNA and with PAB1. The polypeptide is PAN2-PAN3 deadenylation complex subunit PAN3 (Kluyveromyces lactis (strain ATCC 8585 / CBS 2359 / DSM 70799 / NBRC 1267 / NRRL Y-1140 / WM37) (Yeast)).